A 699-amino-acid polypeptide reads, in one-letter code: MTVQKPIESLSPAQAKREHRRLGEQITEHDRLYYQEDAPRVSDAEYDALRRRYEALETAFPELVSAESLTKKIGAAPAEKFAKIIHKVPMLSLANIFSDEEVGEFVARVRRFLGLGADAPLAISAEPKIDGLSCSLRYEGGYLVQAATRGDGYEGEDVTANVRTIQEIPHQLQGHAPEILEVRGEVYMTHADFAALNERQEAAGKTIFANPRNSAAGSLRQLDPKVTAGRPLHFFAYAWGEASEEPADTQMGMVTAFKAFGLPVNPLMQLCHSAEDLIAHYHDIEARRALLDYDIDGVVYKVNSIALQKRLGFVSRAPRWATAHKFPAEKAVTLLRDIEIQVGRTGALTPVARLEPITVGGVVVSNATLHNEDEIARKDIRIGDMVMIQRAGDVIPQILGPILDKRPQDAQPYEFPQVCPVCGSAAIREIDPKTGTADVVRRCTGGLVCAAQVVERLKHFASRNAFDIEGLGDKQIEQFYHDGLIHTPVDIFTLQERDARSLKKLKDREGYGETSVRNLFQAIEARRHIPVNRFIYALGIRHVGETNARRAARAFGTFDALRAVASRAEEGSEERSELTNVEGFGPVVAEAIFDFFHEQHNQDVLDGLLEQVTPEPMEAVAKESPVAGKTVVFTGALEHMTREEAKAQAERLGAKVAGSVSKKTDLVVAGPGAGSKLAKAAELNIETISEEDWLKLVGE.

Residues 1–20 form a disordered region; it reads MTVQKPIESLSPAQAKREHR. NAD(+) contacts are provided by residues 43 to 47, 92 to 93, and glutamate 126; these read DAEYD and SL. The N6-AMP-lysine intermediate role is filled by lysine 128. NAD(+) contacts are provided by arginine 149, glutamate 185, lysine 301, and lysine 325. 4 residues coordinate Zn(2+): cysteine 419, cysteine 422, cysteine 443, and cysteine 449. In terms of domain architecture, BRCT spans 621 to 699; the sequence is AKESPVAGKT…EEDWLKLVGE (79 aa).

The protein belongs to the NAD-dependent DNA ligase family. LigA subfamily. It depends on Mg(2+) as a cofactor. Mn(2+) serves as cofactor.

The enzyme catalyses NAD(+) + (deoxyribonucleotide)n-3'-hydroxyl + 5'-phospho-(deoxyribonucleotide)m = (deoxyribonucleotide)n+m + AMP + beta-nicotinamide D-nucleotide.. In terms of biological role, DNA ligase that catalyzes the formation of phosphodiester linkages between 5'-phosphoryl and 3'-hydroxyl groups in double-stranded DNA using NAD as a coenzyme and as the energy source for the reaction. It is essential for DNA replication and repair of damaged DNA. The polypeptide is DNA ligase (Beijerinckia indica subsp. indica (strain ATCC 9039 / DSM 1715 / NCIMB 8712)).